A 230-amino-acid polypeptide reads, in one-letter code: Sugar fermentation stimulation protein homolog (230 aa).

It belongs to the SfsA family.

The protein is Sugar fermentation stimulation protein homolog of Thermoanaerobacter pseudethanolicus (strain ATCC 33223 / 39E) (Clostridium thermohydrosulfuricum).